Reading from the N-terminus, the 370-residue chain is D-aspartate oxidase (370 aa).

An N-terminal signal peptide occupies residues 1 to 18 (MPPRIIILGAGIIGLSTA). 5 residues coordinate FAD: isoleucine 13, glutamate 42, alanine 63, serine 64, and glycine 68. Asparagine 207 carries N-linked (GlcNAc...) asparagine glycosylation. Arginine 308, glycine 338, and tyrosine 339 together coordinate FAD.

The protein belongs to the DAMOX/DASOX family. As to quaternary structure, monomer. FAD is required as a cofactor.

It carries out the reaction D-aspartate + O2 + H2O = oxaloacetate + H2O2 + NH4(+). It catalyses the reaction D-glutamate + O2 + H2O = H2O2 + 2-oxoglutarate + NH4(+). In terms of biological role, selectively catalyzes the oxidative deamination of acidic amino acids. Protects the organism from the toxicity of D-amino acids. Enables the organism to utilize D-amino acids as a source of nutrients. In Talaromyces thermophilus, this protein is D-aspartate oxidase.